The sequence spans 261 residues: Small ribosomal subunit protein uS2 (261 aa).

Ser2 is subject to N-acetylserine. The segment at 214 to 261 (ATEDIKTDDVEEAPAADAETEWTGETEEVDWAESGATPAAEEAAASNW) is disordered. The span at 222-244 (DVEEAPAADAETEWTGETEEVDW) shows a compositional bias: acidic residues. The span at 245–261 (AESGATPAAEEAAASNW) shows a compositional bias: low complexity.

The protein belongs to the universal ribosomal protein uS2 family. In terms of assembly, component of the small ribosomal subunit. Mature ribosomes consist of a small (40S) and a large (60S) subunit. The 40S subunit contains about 33 different proteins and 1 molecule of RNA (18S). The 60S subunit contains about 49 different proteins and 3 molecules of RNA (25S, 5.8S and 5S). Interacts with RPS21.

It localises to the cytoplasm. Required for the assembly and/or stability of the 40S ribosomal subunit. Required for the processing of the 20S rRNA-precursor to mature 18S rRNA in a late step of the maturation of 40S ribosomal subunits. In Debaryomyces hansenii (strain ATCC 36239 / CBS 767 / BCRC 21394 / JCM 1990 / NBRC 0083 / IGC 2968) (Yeast), this protein is Small ribosomal subunit protein uS2.